The primary structure comprises 472 residues: 3-isopropylmalate dehydratase large subunit (472 aa).

Residues C352, C412, and C415 each coordinate [4Fe-4S] cluster.

Belongs to the aconitase/IPM isomerase family. LeuC type 1 subfamily. As to quaternary structure, heterodimer of LeuC and LeuD. It depends on [4Fe-4S] cluster as a cofactor.

The enzyme catalyses (2R,3S)-3-isopropylmalate = (2S)-2-isopropylmalate. It participates in amino-acid biosynthesis; L-leucine biosynthesis; L-leucine from 3-methyl-2-oxobutanoate: step 2/4. Its function is as follows. Catalyzes the isomerization between 2-isopropylmalate and 3-isopropylmalate, via the formation of 2-isopropylmaleate. The protein is 3-isopropylmalate dehydratase large subunit of Roseiflexus castenholzii (strain DSM 13941 / HLO8).